Consider the following 198-residue polypeptide: Glycerol-3-phosphate acyltransferase 1 (198 aa).

5 helical membrane passes run 5–25 (ALLA…AWLA), 52–72 (GPAL…VLLA), 81–101 (WAAL…FLAF), 111–131 (FGVI…LAIA), and 138–158 (FVSA…LVLP).

Belongs to the PlsY family. In terms of assembly, probably interacts with PlsX.

It localises to the cell membrane. The catalysed reaction is an acyl phosphate + sn-glycerol 3-phosphate = a 1-acyl-sn-glycero-3-phosphate + phosphate. Its pathway is lipid metabolism; phospholipid metabolism. Catalyzes the transfer of an acyl group from acyl-phosphate (acyl-PO(4)) to glycerol-3-phosphate (G3P) to form lysophosphatidic acid (LPA). This enzyme utilizes acyl-phosphate as fatty acyl donor, but not acyl-CoA or acyl-ACP. This Deinococcus radiodurans (strain ATCC 13939 / DSM 20539 / JCM 16871 / CCUG 27074 / LMG 4051 / NBRC 15346 / NCIMB 9279 / VKM B-1422 / R1) protein is Glycerol-3-phosphate acyltransferase 1.